Reading from the N-terminus, the 312-residue chain is Urease accessory protein 7 (312 aa).

The disordered stretch occupies residues 28-86 (QEATGTDSHHAHHHHTPSGASSAISHTHDNMPHDHGQFHDHGPGLWTPEEHGHTHEHLE). Positions 36–87 (HHAHHHHTPSGASSAISHTHDNMPHDHGQFHDHGPGLWTPEEHGHTHEHLEH) are histine rich nickel-binding domain. Basic and acidic residues predominate over residues 53-86 (HTHDNMPHDHGQFHDHGPGLWTPEEHGHTHEHLE). The GTP binding P-loop motif lies at 115 to 122 (GPVGSGKT). Residues 147–154 (TREDQEFL) carry the Switch domain 1 motif. The switch domain 2 motif lies at 171-172 (GG).

It belongs to the SIMIBI class G3E GTPase family. UreG subfamily. In terms of assembly, URE4, URE6 and URE7 may form a complex that acts as a GTP-hydrolysis-dependent molecular chaperone, activating the urease apoprotein URE1.

Its function is as follows. Urease accessory protein that binds 2 nickel atoms likely via its conserved histidine-rich domain and supplies nickel for the functional urease URE1. Has probably a dual function as a nickel chaperone and GTPase. Plays a role in host brain invasion. The polypeptide is Urease accessory protein 7 (Cryptococcus neoformans var. grubii serotype A (strain H99 / ATCC 208821 / CBS 10515 / FGSC 9487) (Filobasidiella neoformans var. grubii)).